The following is a 379-amino-acid chain: Alcohol dehydrogenase class-3 (379 aa).

Positions 47, 69, 99, 102, 105, 113, and 176 each coordinate Zn(2+).

The protein belongs to the zinc-containing alcohol dehydrogenase family. Class-III subfamily. In terms of assembly, homodimer. The cofactor is Zn(2+).

It is found in the cytoplasm. The catalysed reaction is a primary alcohol + NAD(+) = an aldehyde + NADH + H(+). The enzyme catalyses a secondary alcohol + NAD(+) = a ketone + NADH + H(+). It carries out the reaction S-(hydroxymethyl)glutathione + NADP(+) = S-formylglutathione + NADPH + H(+). It catalyses the reaction S-(hydroxymethyl)glutathione + NAD(+) = S-formylglutathione + NADH + H(+). Class-III ADH is remarkably ineffective in oxidizing ethanol, but it readily catalyzes the oxidation of long-chain primary alcohols and the oxidation of S-(hydroxymethyl) glutathione. The protein is Alcohol dehydrogenase class-3 (adh5) of Dictyostelium discoideum (Social amoeba).